Consider the following 206-residue polypeptide: Macrophage immunometabolism regulator (206 aa).

M1 carries the post-translational modification N-acetylmethionine. The tract at residues 1-41 (MEVDINGESRSTLTTLPFPGAEANSPGKAEAEKPRCSSTPC) is disordered. Phosphoserine occurs at positions 25, 140, and 167.

This sequence belongs to the UNC119-binding protein family. As to quaternary structure, interacts with UNC119 and UNC119B; interaction preferentially takes place when UNC119 and UNC119B are unliganded with myristoylated proteins.

The protein resides in the cytoplasm. Its subcellular location is the cell projection. It is found in the cilium. In terms of biological role, regulates the macrophage function, by enhancing the resolution of inflammation and wound repair functions mediated by M2 macrophages. The regulation of macrophage function is, due at least in part, to its ability to inhibit glycolysis. May also play a role in trafficking of proteins via its interaction with UNC119 and UNC119B cargo adapters: may help the release of UNC119 and UNC119B cargo or the recycling of UNC119 and UNC119B. May play a role in ciliary membrane localization via its interaction with UNC119B and protein transport into photoreceptor cells. The protein is Macrophage immunometabolism regulator (MACIR) of Pongo abelii (Sumatran orangutan).